A 116-amino-acid polypeptide reads, in one-letter code: Putative pterin-4-alpha-carbinolamine dehydratase 1 (116 aa).

It belongs to the pterin-4-alpha-carbinolamine dehydratase family.

It catalyses the reaction (4aS,6R)-4a-hydroxy-L-erythro-5,6,7,8-tetrahydrobiopterin = (6R)-L-erythro-6,7-dihydrobiopterin + H2O. The sequence is that of Putative pterin-4-alpha-carbinolamine dehydratase 1 from Gloeobacter violaceus (strain ATCC 29082 / PCC 7421).